A 349-amino-acid chain; its full sequence is Core protein VP7 (349 aa).

Asn193 and Asn287 each carry an N-linked (GlcNAc...) asparagine; by host glycan.

Belongs to the orbivirus VP7 family. Homotrimer that assemble in a complex of 260 capsomers on an inner scaffold composed of VP3.

The protein resides in the virion. Its function is as follows. The VP7 protein is one of the five proteins (with VP1, VP3, VP4, and VP6) which form the inner capsid of the virus. The chain is Core protein VP7 (Segment-7) from Antilocapra americana (Pronghorn).